Consider the following 695-residue polypeptide: Calcium-binding acidic-repeat protein (695 aa).

Positions 1–20 (MSHLWCWLFLVLCLACLVLS) form a signal peptide, or 23. 6 TSP type-3 repeats span residues 24 to 38 (KDSD…DEIN), 47 to 56 (ADSDQDGLTD), 70 to 82 (KDTD…DGVE), 184 to 196 (GDSD…DGAE), 202 to 214 (KDSD…DEEE), and 248 to 260 (GDSD…DGAE). A disordered region spans residues 45 to 695 (YNADSDQDGL…TDPWRSDHSV (651 aa)). Basic and acidic residues predominate over residues 59 to 70 (EVNRHQTHPQDK). Acidic residues-rich tracts occupy residues 271–283 (ADSD…DGEE), 291–306 (PEDP…DGDE), and 313–324 (DPEEDDSDEDGV). 15 TSP type-3 repeats span residues 294–308 (PDSD…DEVN), 317–329 (DDSD…DGAE), 340–352 (EDSD…DGAE), 363–375 (EDSD…DGAE), 379–393 (TDSD…DEVA), 402–414 (ADSD…DGAE), 425–437 (KDTD…DGVE), 470–482 (EDTD…DGAE), 493–505 (ADTD…DGAE), 516–528 (ADSD…DGAE), 539–551 (GDSD…DAAE), 555–569 (KDSD…DEVR), 600–609 (RDTDGDGVAD), 623–635 (ADTD…DGAE), and 646–658 (ADSD…DGAE). Acidic residues-rich tracts occupy residues 361 to 370 (NDEDSDDDGI) and 381 to 392 (SDGDGLPDEDEV). Composition is skewed to acidic residues over residues 467–477 (PNDEDTDDDGL) and 491–500 (EDADTDDDGL). The span at 537–546 (NDGDSDDDGV) shows a compositional bias: acidic residues. A compositionally biased stretch (basic and acidic residues) spans 589–603 (EILKHKTDPRNRDTD). Residues 665–679 (NAKDGDSDDDGKADG) show a composition bias toward basic and acidic residues.

The protein resides in the secreted. It is found in the endoplasmic reticulum. In terms of biological role, may function as a calcium-binding protein. The polypeptide is Calcium-binding acidic-repeat protein (Euglena gracilis).